The sequence spans 183 residues: ATP synthase subunit b, chloroplastic (183 aa).

Residues 28 to 48 (DIFEANVINILLLLFGLIYVL) form a helical membrane-spanning segment.

It belongs to the ATPase B chain family. As to quaternary structure, F-type ATPases have 2 components, F(1) - the catalytic core - and F(0) - the membrane proton channel. F(1) has five subunits: alpha(3), beta(3), gamma(1), delta(1), epsilon(1). F(0) has four main subunits: a(1), b(1), b'(1) and c(10-14). The alpha and beta chains form an alternating ring which encloses part of the gamma chain. F(1) is attached to F(0) by a central stalk formed by the gamma and epsilon chains, while a peripheral stalk is formed by the delta, b and b' chains.

It localises to the plastid. It is found in the chloroplast thylakoid membrane. Its function is as follows. F(1)F(0) ATP synthase produces ATP from ADP in the presence of a proton or sodium gradient. F-type ATPases consist of two structural domains, F(1) containing the extramembraneous catalytic core and F(0) containing the membrane proton channel, linked together by a central stalk and a peripheral stalk. During catalysis, ATP synthesis in the catalytic domain of F(1) is coupled via a rotary mechanism of the central stalk subunits to proton translocation. In terms of biological role, component of the F(0) channel, it forms part of the peripheral stalk, linking F(1) to F(0). The polypeptide is ATP synthase subunit b, chloroplastic (Porphyra purpurea (Red seaweed)).